A 374-amino-acid chain; its full sequence is Phosphate acyltransferase (374 aa).

The protein belongs to the PlsX family. In terms of assembly, homodimer. Probably interacts with PlsY.

It localises to the cytoplasm. It carries out the reaction a fatty acyl-[ACP] + phosphate = an acyl phosphate + holo-[ACP]. It functions in the pathway lipid metabolism; phospholipid metabolism. Catalyzes the reversible formation of acyl-phosphate (acyl-PO(4)) from acyl-[acyl-carrier-protein] (acyl-ACP). This enzyme utilizes acyl-ACP as fatty acyl donor, but not acyl-CoA. The chain is Phosphate acyltransferase from Gluconacetobacter diazotrophicus (strain ATCC 49037 / DSM 5601 / CCUG 37298 / CIP 103539 / LMG 7603 / PAl5).